A 176-amino-acid chain; its full sequence is Zinc finger A20 and AN1 domain-containing stress-associated protein 9 (176 aa).

The A20-type zinc finger occupies 16 to 50; it reads ASEPKLCVKGCGFFGSPSNMDLCSKCYRGICAEEA. Zn(2+) contacts are provided by Cys22, Cys26, Cys38, Cys41, Cys117, Cys120, Cys131, Cys133, Cys138, His141, His147, and Cys149. The AN1-type zinc finger occupies 111-157; it reads PARTNRCLCCNKKVGIMGFKCKCGSTFCGEHRYPETHDCSFDFKEVG.

In terms of biological role, may be involved in environmental stress response. In Arabidopsis thaliana (Mouse-ear cress), this protein is Zinc finger A20 and AN1 domain-containing stress-associated protein 9 (SAP9).